The sequence spans 317 residues: Type II restriction enzyme NaeI (317 aa).

Homodimer.

It catalyses the reaction Endonucleolytic cleavage of DNA to give specific double-stranded fragments with terminal 5'-phosphates.. An E and P subtype restriction enzyme that recognizes the double-stranded unmethylated sequence 5'-GCCGGC-3' and cleaves after C-3. This chain is Type II restriction enzyme NaeI, found in Lentzea aerocolonigenes (Lechevalieria aerocolonigenes).